A 285-amino-acid chain; its full sequence is MPAATVDHSQRICEVWACNLDEEMKKIRQVIRKYNYVAMDTEFPGVVARPIGEFRSNADYQYQLLRCNVDLLKIIQLGLTFMNEQGEYPPGTSTWQFNFKFNLTEDMYAQDSIELLTTSGIQFKKHEEEGIETQYFAELLMTSGVVLCEGVKWLSFHSGYDFGYLIKILTNSNLPEEELDFFEILRLFFPVIYDVKYLMKSCKNLKGGLQEVAEQLELERIGPQHQAGSDSLLTGMAFFKMREMFFEDHIDDAKYCGHLYGLGSGSSYVQNGTGNAYEEEASKQS.

5 residues coordinate a divalent metal cation: D40, E42, D161, D230, and E278.

Belongs to the CAF1 family. Component of the CCR4-NOT complex; distinct complexes seem to exist that differ in the participation of probably mutually exclusive catalytic subunits; the complex contains two deadenylase subunits, CNOT6 or CNOT6L, and CNOT7 or CNOT8. In the complex, interacts directly with CNOT1. Interacts with AGO2. Interacts with TOB1; recruited by TOB1 to a ternary complex with CPEB3 which is required for mRNA deadenylation and decay. Interacts with BTG1. Interacts with BTG2. Interacts with NANOS2. Interacts with ZFP36, ZFP36L1 and ZFP36L2; these interactions are inhibited in response to phorbol 12-myristate 13-acetate (PMA) treatment in a p38 MAPK-dependent manner. Interacts with BTG4. Interacts with EIF4E; this interaction is increased by CNOT7 interaction with BTG4. Mn(2+) is required as a cofactor. The cofactor is Mg(2+). Co(2+) serves as cofactor.

Its subcellular location is the nucleus. It localises to the cytoplasm. The protein resides in the P-body. It is found in the cytoplasmic ribonucleoprotein granule. It carries out the reaction Exonucleolytic cleavage of poly(A) to 5'-AMP.. Functionally, has 3'-5' poly(A) exoribonuclease activity for synthetic poly(A) RNA substrate. Its function seems to be partially redundant with that of CNOT8. Catalytic component of the CCR4-NOT complex which is one of the major cellular mRNA deadenylases and is linked to various cellular processes including bulk mRNA degradation, miRNA-mediated repression, translational repression during translational initiation and general transcription regulation. During miRNA-mediated repression the complex also seems to act as translational repressor during translational initiation. Additional complex functions may be a consequence of its influence on mRNA expression. Required for miRNA-mediated mRNA deadenylation. Associates with members of the BTG family such as TOB1 and BTG2 and is required for their anti-proliferative activity. The sequence is that of CCR4-NOT transcription complex subunit 7 (CNOT7) from Bos taurus (Bovine).